The sequence spans 348 residues: Histidinol-phosphate aminotransferase (348 aa).

Residues 1–31 (MLPTRDCVRQTPAYTPGEQPQTAGFTKLNTN) are disordered. Positions 18-31 (EQPQTAGFTKLNTN) are enriched in polar residues. The residue at position 207 (lysine 207) is an N6-(pyridoxal phosphate)lysine.

Belongs to the class-II pyridoxal-phosphate-dependent aminotransferase family. Histidinol-phosphate aminotransferase subfamily. In terms of assembly, homodimer. The cofactor is pyridoxal 5'-phosphate.

The catalysed reaction is L-histidinol phosphate + 2-oxoglutarate = 3-(imidazol-4-yl)-2-oxopropyl phosphate + L-glutamate. Its pathway is amino-acid biosynthesis; L-histidine biosynthesis; L-histidine from 5-phospho-alpha-D-ribose 1-diphosphate: step 7/9. This chain is Histidinol-phosphate aminotransferase, found in Microcystis aeruginosa (strain NIES-843 / IAM M-2473).